Reading from the N-terminus, the 630-residue chain is CREB-regulated transcription coactivator 1 (630 aa).

Ser64 and Ser113 each carry phosphoserine. Disordered stretches follow at residues 142-174 (ADTS…GPQD), 187-221 (GMEE…VPGI), 256-331 (SPLP…LSPL), and 356-475 (QAGS…HTST). Residue Thr149 is modified to Phosphothreonine. Ser151 bears the Phosphoserine; by SIK1 and SIK2 mark. Residues 151–167 (SDSALHQSTMTPTQAES) are compositionally biased toward polar residues. Position 161 is a phosphothreonine (Thr161). Residues 194-208 (ETDKTLSKQSWDSKK) are compositionally biased toward basic and acidic residues. Residues 242–258 (TGGSLPDLSTIHFPSPL) carry the Nuclear export signal motif. Over residues 256–270 (SPLPTPLDPEEPPFP) the composition is skewed to pro residues. Polar residues-rich tracts occupy residues 292 to 301 (GMNTPSSSPQ) and 310 to 331 (LSLS…LSPL). A compositionally biased stretch (pro residues) spans 361–384 (QPPPQPQPPPPPPPVSQQQPPPPQ). A compositionally biased stretch (low complexity) spans 385 to 394 (VSVGLPQGGP). 2 stretches are compositionally biased toward polar residues: residues 414 to 426 (VPST…TESP) and 450 to 475 (PATQ…HTST).

This sequence belongs to the TORC family. As to quaternary structure, binds, as a tetramer, through its N-terminal region, with the bZIP domain of CREB1. 'Arg-314' in the bZIP domain of CREB1 is essential for this interaction. Interaction, via its C-terminal, with TAF4, enhances recruitment of TAF4 to CREB1. Interacts with 14-3-3 proteins, including YWHAE/14-3-3 epsilon. Interacts with calmodulin-dependent catalytic subunit PPP3CA/calcineurin A. Post-translationally, phosphorylation/dephosphorylation states of Ser-151 are required for regulating transduction of CREB activity. TORCs are inactive when phosphorylated, and active when dephosphorylated at this site. This primary site of phosphorylation is mediated by SIKs (SIK1 and SIK2), is regulated by cAMP and calcium levels and is dependent on the phosphorylation of SIKs by LKB1. Highly expressed in developing cortical neurons, peaking during dendrite development.

The protein resides in the cytoplasm. The protein localises to the nucleus. Transcriptional coactivator for CREB1 which activates transcription through both consensus and variant cAMP response element (CRE) sites. Acts as a coactivator, in the SIK/TORC signaling pathway, being active when dephosphorylated and acts independently of CREB1 'Ser-133' phosphorylation. Enhances the interaction of CREB1 with TAF4. Regulates the expression of specific CREB-activated genes such as the steroidogenic gene, StAR. Potent coactivator of PGC1alpha and inducer of mitochondrial biogenesis in muscle cells. In the hippocampus, involved in late-phase long-term potentiation (L-LTP) maintenance at the Schaffer collateral-CA1 synapses. May be required for dendritic growth of developing cortical neurons. In concert with SIK1, regulates the light-induced entrainment of the circadian clock. In response to light stimulus, coactivates the CREB-mediated transcription of PER1 which plays an important role in the photic entrainment of the circadian clock. This Rattus norvegicus (Rat) protein is CREB-regulated transcription coactivator 1 (Crtc1).